Reading from the N-terminus, the 79-residue chain is Cell division protein ZapB (79 aa).

Residues 6 to 78 are a coiled coil; sequence FEKLEVKVQQ…LRALLGKMEE (73 aa).

It belongs to the ZapB family. In terms of assembly, homodimer. The ends of the coiled-coil dimer bind to each other, forming polymers. Interacts with FtsZ.

The protein resides in the cytoplasm. Its function is as follows. Non-essential, abundant cell division factor that is required for proper Z-ring formation. It is recruited early to the divisome by direct interaction with FtsZ, stimulating Z-ring assembly and thereby promoting cell division earlier in the cell cycle. Its recruitment to the Z-ring requires functional FtsA or ZipA. This Yersinia enterocolitica serotype O:8 / biotype 1B (strain NCTC 13174 / 8081) protein is Cell division protein ZapB.